Reading from the N-terminus, the 421-residue chain is Odorant receptor 67b (421 aa).

Residues 1 to 48 (MQDQLDHELERIDKLPKLGLLWVEYSAYALGVNIAPRKRSSKYCRLTR) are Cytoplasmic-facing. The chain crosses the membrane as a helical span at residues 49–69 (ILVLIVNLSIIYSLVAFIMEN). Residues 70 to 71 (YM) are Extracellular-facing. The helical transmembrane segment at 72–92 (ISFETYVEAVLLTFQLSVGVV) threads the bilayer. The Cytoplasmic segment spans residues 93–151 (KMFHFQNKVESCSQLVFSTETGEVLKSLGLFQLDLPRKKELLSSVSLILLNNWMIIDRQ). Residues 152–172 (VMFFFKIVCMPVLYYCVRPYF) form a helical membrane-spanning segment. At 173-217 (QYIFDCYIKDKDTCEMTLTYPAIVPYLQLGNYEFPSYVIRFFLLQ) the chain is on the extracellular side. A helical membrane pass occupies residues 218–238 (SGPLWCFFAVFGFNSLFVVLT). The Cytoplasmic segment spans residues 239–289 (RYESGLIKVLRFLVQNSTSDILVPKDQRVKYLQCCVRLFARISSHHNQIEN). The helical transmembrane segment at 290 to 310 (LFKYIILVQCSVSSILICMLL) threads the bilayer. The Extracellular segment spans residues 311–315 (YKIST). The chain crosses the membrane as a helical span at residues 316–336 (VLEVGWVWMGMIMVYFVTIAL). At 337 to 384 (EITLYNVSAQKVESQSELLFHDWYNCSWYNESREFKFMIKMMLLFSRR) the chain is on the cytoplasmic side. Residues 385–405 (TFVLSVGGFTSLSHKFLVQVF) form a helical membrane-spanning segment. Residues 406 to 421 (RLSANFFLLLRNMNNK) are Extracellular-facing.

It belongs to the insect chemoreceptor superfamily. Heteromeric odorant receptor channel (TC 1.A.69) family. Or63a subfamily. As to quaternary structure, interacts with Orco. Complexes exist early in the endomembrane system in olfactory sensory neurons (OSNs), coupling these complexes to the conserved ciliary trafficking pathway.

It localises to the cell membrane. Its function is as follows. Odorant receptor which mediates acceptance or avoidance behavior, depending on its substrates. The odorant receptor repertoire encodes a large collection of odor stimuli that vary widely in identity, intensity, and duration. May form a complex with Orco to form odorant-sensing units, providing sensitive and prolonged odorant signaling and calcium permeability. Involved in the behavioral responses to ethyl acetate, pentyl acetate, methyl caproate, anisole, heptanal, 2-heptanone, r-carvone, nonanoic acid, and pyrazines. This is Odorant receptor 67b (Or67b) from Drosophila melanogaster (Fruit fly).